We begin with the raw amino-acid sequence, 861 residues long: Leucine--tRNA ligase (861 aa).

The 'HIGH' region signature appears at 42–52; the sequence is PYPSGKLHMGH. Positions 620 to 624 match the 'KMSKS' region motif; the sequence is KMSKS. Lys623 contributes to the ATP binding site.

The protein belongs to the class-I aminoacyl-tRNA synthetase family.

It localises to the cytoplasm. It carries out the reaction tRNA(Leu) + L-leucine + ATP = L-leucyl-tRNA(Leu) + AMP + diphosphate. This chain is Leucine--tRNA ligase, found in Buchnera aphidicola subsp. Schizaphis graminum (strain Sg).